A 162-amino-acid polypeptide reads, in one-letter code: Phosphopantetheine adenylyltransferase (162 aa).

Thr9 lines the substrate pocket. ATP is bound by residues 9–10 (TF) and His17. Substrate is bound by residues Lys41, Leu73, and Arg87. Residues 88–90 (GLR), Glu98, and 123–129 (LSYISSS) each bind ATP.

This sequence belongs to the bacterial CoaD family. In terms of assembly, homohexamer. The cofactor is Mg(2+).

It is found in the cytoplasm. It carries out the reaction (R)-4'-phosphopantetheine + ATP + H(+) = 3'-dephospho-CoA + diphosphate. The protein operates within cofactor biosynthesis; coenzyme A biosynthesis; CoA from (R)-pantothenate: step 4/5. Functionally, reversibly transfers an adenylyl group from ATP to 4'-phosphopantetheine, yielding dephospho-CoA (dPCoA) and pyrophosphate. The chain is Phosphopantetheine adenylyltransferase from Teredinibacter turnerae (strain ATCC 39867 / T7901).